The chain runs to 1022 residues: Leucine--tRNA ligase (1022 aa).

The 'HIGH' region motif lies at 47–57 (PYPNSPMHLGH). Positions 697–701 (KMSKS) match the 'KMSKS' region motif. Residue Lys700 coordinates ATP.

Belongs to the class-I aminoacyl-tRNA synthetase family.

It localises to the cytoplasm. It carries out the reaction tRNA(Leu) + L-leucine + ATP = L-leucyl-tRNA(Leu) + AMP + diphosphate. In Ignicoccus hospitalis (strain KIN4/I / DSM 18386 / JCM 14125), this protein is Leucine--tRNA ligase.